The primary structure comprises 468 residues: Chromosomal replication initiator protein DnaA (468 aa).

Residues 1–90 form a domain I, interacts with DnaA modulators region; the sequence is MTQEKWGLLC…NSPMRPARAA (90 aa). The domain II stretch occupies residues 91-126; that stretch reads RPAAAAAAAAAAVEAPQVSAPRATDTSDVLDGLQAA. The segment at 127–348 is domain III, AAA+ region; it reads PLDPRFTFDS…GALTRLFAFA (222 aa). 4 residues coordinate ATP: Gly171, Gly173, Lys174, and Thr175. Residues 349–468 form a domain IV, binds dsDNA region; sequence SLVGREIDME…VEMLRRALEA (120 aa).

It belongs to the DnaA family. As to quaternary structure, oligomerizes as a right-handed, spiral filament on DNA at oriC.

The protein resides in the cytoplasm. Functionally, plays an essential role in the initiation and regulation of chromosomal replication. ATP-DnaA binds to the origin of replication (oriC) to initiate formation of the DNA replication initiation complex once per cell cycle. Binds the DnaA box (a 9 base pair repeat at the origin) and separates the double-stranded (ds)DNA. Forms a right-handed helical filament on oriC DNA; dsDNA binds to the exterior of the filament while single-stranded (ss)DNA is stabiized in the filament's interior. The ATP-DnaA-oriC complex binds and stabilizes one strand of the AT-rich DNA unwinding element (DUE), permitting loading of DNA polymerase. After initiation quickly degrades to an ADP-DnaA complex that is not apt for DNA replication. Binds acidic phospholipids. This is Chromosomal replication initiator protein DnaA from Ruegeria pomeroyi (strain ATCC 700808 / DSM 15171 / DSS-3) (Silicibacter pomeroyi).